We begin with the raw amino-acid sequence, 1409 residues long: DNA-directed RNA polymerase subunit beta' (1409 aa).

4 residues coordinate Zn(2+): C70, C72, C85, and C88. The Mg(2+) site is built by D458, D460, and D462. C813, C887, C894, and C897 together coordinate Zn(2+).

This sequence belongs to the RNA polymerase beta' chain family. As to quaternary structure, the RNAP catalytic core consists of 2 alpha, 1 beta, 1 beta' and 1 omega subunit. When a sigma factor is associated with the core the holoenzyme is formed, which can initiate transcription. Mg(2+) is required as a cofactor. The cofactor is Zn(2+).

The enzyme catalyses RNA(n) + a ribonucleoside 5'-triphosphate = RNA(n+1) + diphosphate. Its function is as follows. DNA-dependent RNA polymerase catalyzes the transcription of DNA into RNA using the four ribonucleoside triphosphates as substrates. The protein is DNA-directed RNA polymerase subunit beta' of Acidovorax ebreus (strain TPSY) (Diaphorobacter sp. (strain TPSY)).